The following is a 236-amino-acid chain: Protein-S-isoprenylcysteine O-methyltransferase (236 aa).

Transmembrane regions (helical) follow at residues 3 to 23 (NLHT…LGCV), 24 to 44 (FGLG…FFAF), 76 to 96 (AYWL…GKSF), and 108 to 128 (FLIN…LCLG). Residues 155–158 (HLLV), Tyr-163, and 168–171 (HPSY) each bind S-adenosyl-L-methionine. Residues 174 to 194 (FFIWALGTQMLLGNFVSTLLF) traverse the membrane as a helical segment. Arg-205 is a binding site for substrate. Position 209 (Glu-209) interacts with S-adenosyl-L-methionine.

Belongs to the class VI-like SAM-binding methyltransferase superfamily. Isoprenylcysteine carboxyl methyltransferase family.

It is found in the membrane. It catalyses the reaction [protein]-C-terminal S-[(2E,6E)-farnesyl]-L-cysteine + S-adenosyl-L-methionine = [protein]-C-terminal S-[(2E,6E)-farnesyl]-L-cysteine methyl ester + S-adenosyl-L-homocysteine. Functionally, mediates C-terminal methylation of the isoprenylated C-terminal cysteine in M-factor. The sequence is that of Protein-S-isoprenylcysteine O-methyltransferase (mam4) from Schizosaccharomyces pombe (strain 972 / ATCC 24843) (Fission yeast).